We begin with the raw amino-acid sequence, 352 residues long: Lipid storage droplets surface-binding protein 2 (352 aa).

Disordered regions lie at residues 1-28 and 298-352; these read MASAEQKHATGNGTTGNGTAMNDVDQPK and NVEQ…VSSQ. Positions 298-309 are enriched in polar residues; that stretch reads NVEQSGGSSSDA. Residues 315-329 are compositionally biased toward low complexity; it reads TTTSTTTTTTTSSTS.

This sequence belongs to the perilipin family. Ubiquitous expression in early embryos. At stage 5 expression is restricted to the pole cells. At stage 11 expression is seen in the amnioserosa, refined to the fat body and midgut by stage 14. Also seen in the hindgut by the end of embryogenesis. Expression is seen in larval fat body (at protein level).

The protein localises to the cytoplasm. It is found in the lipid droplet. Its function is as follows. Essential for embryogenesis. Required for normal deposition of neutral lipids in the oocyte. This chain is Lipid storage droplets surface-binding protein 2, found in Drosophila melanogaster (Fruit fly).